The primary structure comprises 178 residues: Peptidyl-prolyl cis-trans isomerase (178 aa).

Residues 1–17 (MKLLFFFLVLAVSAAVA) form the signal peptide. The PPIase cyclophilin-type domain maps to 26–177 (FMDIEIDGES…KIAKITDIGL (152 aa)).

It belongs to the cyclophilin-type PPIase family. PPIase A subfamily.

The enzyme catalyses [protein]-peptidylproline (omega=180) = [protein]-peptidylproline (omega=0). In terms of biological role, PPIases accelerate the folding of proteins. It catalyzes the cis-trans isomerization of proline imidic peptide bonds in oligopeptides. Up-regulates interferon gamma production by bovine T-cells. Stimulates high levels of IFN-gamma production by peripheral blood mononuclear cells and T-cells. The IFN-gamma-inducing effect is blocked by cyclosporin A (CsA). This is Peptidyl-prolyl cis-trans isomerase from Neospora caninum (Coccidian parasite).